Consider the following 381-residue polypeptide: tRNA-cytidine(32) 2-sulfurtransferase (381 aa).

Positions 101-106 (SGGKDS) match the PP-loop motif motif. [4Fe-4S] cluster is bound by residues C176, C179, and C267.

It belongs to the TtcA family. In terms of assembly, homodimer. Requires Mg(2+) as cofactor. [4Fe-4S] cluster is required as a cofactor.

It localises to the cytoplasm. It catalyses the reaction cytidine(32) in tRNA + S-sulfanyl-L-cysteinyl-[cysteine desulfurase] + AH2 + ATP = 2-thiocytidine(32) in tRNA + L-cysteinyl-[cysteine desulfurase] + A + AMP + diphosphate + H(+). It participates in tRNA modification. In terms of biological role, catalyzes the ATP-dependent 2-thiolation of cytidine in position 32 of tRNA, to form 2-thiocytidine (s(2)C32). The sulfur atoms are provided by the cysteine/cysteine desulfurase (IscS) system. The polypeptide is tRNA-cytidine(32) 2-sulfurtransferase (Psychrobacter arcticus (strain DSM 17307 / VKM B-2377 / 273-4)).